Consider the following 151-residue polypeptide: Large ribosomal subunit protein uL13 (151 aa).

It belongs to the universal ribosomal protein uL13 family. Part of the 50S ribosomal subunit.

This protein is one of the early assembly proteins of the 50S ribosomal subunit, although it is not seen to bind rRNA by itself. It is important during the early stages of 50S assembly. In Mycoplasma mycoides subsp. mycoides SC (strain CCUG 32753 / NCTC 10114 / PG1), this protein is Large ribosomal subunit protein uL13.